A 550-amino-acid polypeptide reads, in one-letter code: Hydroxylamine reductase (550 aa).

Residues cysteine 3, cysteine 6, cysteine 18, and cysteine 25 each coordinate [2Fe-2S] cluster. Residues histidine 249, glutamate 273, cysteine 317, cysteine 405, cysteine 433, cysteine 458, glutamate 492, and lysine 494 each coordinate hybrid [4Fe-2O-2S] cluster. Cysteine 405 is subject to Cysteine persulfide.

It belongs to the HCP family. Requires [2Fe-2S] cluster as cofactor. Hybrid [4Fe-2O-2S] cluster serves as cofactor.

The protein resides in the cytoplasm. It carries out the reaction A + NH4(+) + H2O = hydroxylamine + AH2 + H(+). In terms of biological role, catalyzes the reduction of hydroxylamine to form NH(3) and H(2)O. The sequence is that of Hydroxylamine reductase from Escherichia coli O139:H28 (strain E24377A / ETEC).